The primary structure comprises 166 residues: Small ribosomal subunit protein uS5 (166 aa).

One can recognise an S5 DRBM domain in the interval 12-75 (YIEKLVQVNR…EAARRNMIQV (64 aa)).

Belongs to the universal ribosomal protein uS5 family. Part of the 30S ribosomal subunit. Contacts proteins S4 and S8.

Its function is as follows. With S4 and S12 plays an important role in translational accuracy. In terms of biological role, located at the back of the 30S subunit body where it stabilizes the conformation of the head with respect to the body. The sequence is that of Small ribosomal subunit protein uS5 from Pseudomonas savastanoi pv. phaseolicola (strain 1448A / Race 6) (Pseudomonas syringae pv. phaseolicola (strain 1448A / Race 6)).